The following is a 66-amino-acid chain: Large ribosomal subunit protein bL33c (66 aa).

The protein belongs to the bacterial ribosomal protein bL33 family.

Its subcellular location is the plastid. It is found in the chloroplast. The chain is Large ribosomal subunit protein bL33c from Jasminum nudiflorum (Winter jasmine).